The sequence spans 573 residues: FACT complex subunit pob3 (573 aa).

Disordered stretches follow at residues 153 to 174 and 485 to 573; these read SDGD…KAAA and LDND…KIGK. Residues 486-495 are compositionally biased toward acidic residues; the sequence is DNDDMMSSDE. Basic and acidic residues predominate over residues 496 to 505; sequence DGGRADRGSA. 2 stretches are compositionally biased toward acidic residues: residues 506-530 and 541-562; these read DEDE…EFDS and AEMD…SEEE.

Belongs to the SSRP1 family. As to quaternary structure, forms a stable heterodimer with spt16. The spt16-pob3 dimer weakly associates with multiple molecules of nhp6 to form the FACT complex.

It is found in the nucleus. It localises to the chromosome. Its function is as follows. Component of the FACT complex, a general chromatin factor that acts to reorganize nucleosomes. The FACT complex is involved in multiple processes that require DNA as a template such as mRNA elongation, DNA replication and DNA repair. During transcription elongation the FACT complex acts as a histone chaperone that both destabilizes and restores nucleosomal structure. It facilitates the passage of RNA polymerase II and transcription by promoting the dissociation of one histone H2A-H2B dimer from the nucleosome, then subsequently promotes the reestablishment of the nucleosome following the passage of RNA polymerase II. The protein is FACT complex subunit pob3 (pob3) of Aspergillus fumigatus (strain ATCC MYA-4609 / CBS 101355 / FGSC A1100 / Af293) (Neosartorya fumigata).